We begin with the raw amino-acid sequence, 187 residues long: Adenine phosphoribosyltransferase (187 aa).

This sequence belongs to the purine/pyrimidine phosphoribosyltransferase family. As to quaternary structure, homodimer.

The protein localises to the cytoplasm. The enzyme catalyses AMP + diphosphate = 5-phospho-alpha-D-ribose 1-diphosphate + adenine. Its pathway is purine metabolism; AMP biosynthesis via salvage pathway; AMP from adenine: step 1/1. Functionally, catalyzes a salvage reaction resulting in the formation of AMP, that is energically less costly than de novo synthesis. This is Adenine phosphoribosyltransferase from Burkholderia pseudomallei (strain 668).